The sequence spans 68 residues: Conotoxin Lt5.11 (68 aa).

The signal sequence occupies residues 1–19; the sequence is MLCLPVFIILLLLASPAAP. The propeptide occupies 20–54; sequence KSLETRIQNDLIRAGLTDADLKTEKGFLSGLLNVA.

This sequence belongs to the conotoxin T superfamily. In terms of processing, contains 2 disulfide bonds that can be either 'C1-C3, C2-C4' or 'C1-C4, C2-C3', since these disulfide connectivities have been observed for conotoxins with cysteine framework V (for examples, see AC P0DQQ7 and AC P81755). Expressed by the venom duct.

It is found in the secreted. The sequence is that of Conotoxin Lt5.11 from Conus litteratus (Lettered cone).